An 814-amino-acid chain; its full sequence is Outer membrane usher protein SefC (814 aa).

The signal sequence occupies residues 1 to 30 (MKKTTITLFVLTSVFHSGNVFSRQYNFDYG). C792 and C813 are joined by a disulfide.

This sequence belongs to the fimbrial export usher family.

The protein localises to the cell outer membrane. Functionally, involved in the export and assembly of the SefA fimbrial subunit. The protein is Outer membrane usher protein SefC (sefC) of Salmonella enteritidis.